The following is a 393-amino-acid chain: MKQLKPNSKYLLFGQALSFMGDYCVLPALLILSTYYHDYWVTSGVIAVRSIPMVFQPFLGVLVDRLDRVKIMLWTDVIRGVIFLGLTFLPKGEYPLLFLALLFVSYGSGVFFNPARLAVMSSLEADIKNINTLFAKATTISIIVGAAAGGLFLLGGSVELAVAFNGVTYLVSAFFISRIKLQYVPIQSENVREAFQSFKEGLKEIKTNAFVLNAMFTMITMALLWGVVYSYFPIVSRFLGDGEIGNFILTFCIGFGGFIGAALVSKWGFNNNKGLMYFTVLSIVSLALFLFTPIFAVSVIAAILFFIAMEYGEVLAKVKVQENAANQIQGRIFSVAEASIGLCIAVGSMLINIVDAAVIMAFIVLLVSGLFLHTKLVNKSFSERNNESEQIHL.

Helical transmembrane passes span 11–31 (LLFG…ALLI), 43–63 (SGVI…GVLV), 69–89 (VKIM…LTFL), 92–112 (GEYP…GVFF), 133–155 (LFAK…FLLG), 160–177 (LAVA…FFIS), 215–235 (MFTM…FPIV), 244–264 (IGNF…AALV), 287–307 (ALFL…LFFI), and 353–373 (IVDA…LFLH).

The protein belongs to the major facilitator superfamily.

Its subcellular location is the cell membrane. Its function is as follows. Part of the bacilysin biosynthesis operon. May be involved in self-resistance to bacilysin by permitting efflux of this antibiotic. This chain is Putative bacilysin exporter BacE (bacE), found in Bacillus subtilis.